Consider the following 390-residue polypeptide: GTP 3',8-cyclase, mitochondrial (390 aa).

The N-terminal 45 residues, 1–45 (MRRCFSKITDCHLGFKNSNFLLVGSEVGSGSVTRTITTTTSERLF), are a transit peptide targeting the mitochondrion. Residues 69–290 (KFGRLHTYLR…PSIKRMQDHP (222 aa)) enclose the Radical SAM core domain. Position 78 (R78) interacts with GTP. Residues C85 and C89 each contribute to the [4Fe-4S] cluster site. Position 91 (Y91) interacts with S-adenosyl-L-methionine. Position 92 (C92) interacts with [4Fe-4S] cluster. GTP is bound at residue R128. G132 contacts S-adenosyl-L-methionine. T159 provides a ligand contact to GTP. S183 serves as a coordination point for S-adenosyl-L-methionine. K220 contributes to the GTP binding site. Position 254 (M254) interacts with S-adenosyl-L-methionine. Residues C317 and C320 each contribute to the [4Fe-4S] cluster site. 322–324 (RLR) serves as a coordination point for GTP. C334 is a binding site for [4Fe-4S] cluster.

Belongs to the radical SAM superfamily. MoaA family. As to quaternary structure, homodimer. The cofactor is [4Fe-4S] cluster. As to expression, expressed in all organs, with an abundant expression in the roots.

Its subcellular location is the mitochondrion matrix. It catalyses the reaction GTP + AH2 + S-adenosyl-L-methionine = (8S)-3',8-cyclo-7,8-dihydroguanosine 5'-triphosphate + 5'-deoxyadenosine + L-methionine + A + H(+). The protein operates within cofactor biosynthesis; molybdopterin biosynthesis. Catalyzes the cyclization of GTP to (8S)-3',8-cyclo-7,8-dihydroguanosine 5'-triphosphate. This Arabidopsis thaliana (Mouse-ear cress) protein is GTP 3',8-cyclase, mitochondrial (CNX2).